The chain runs to 1486 residues: Glutamate synthase [NADPH] large chain (1486 aa).

Residues 1 to 11 constitute a propeptide that is removed on maturation; the sequence is MLYDKSLERDN. Residue cysteine 12 is the Nucleophile of the active site. The Glutamine amidotransferase type-2 domain maps to 12–402; that stretch reads CGFGLIAHIE…PGELMVIDTR (391 aa). An FMN-binding site is contributed by 1049-1101; sequence LVETQQALVANGLRHKIRLQVDGGLKTGVDIIKAAILGAESFGFGTGPMVALG. Residues cysteine 1102, cysteine 1108, and cysteine 1113 each coordinate [3Fe-4S] cluster.

It belongs to the glutamate synthase family. In terms of assembly, aggregate of 4 catalytic active heterodimers, consisting of a large and a small subunit. The cofactor is [3Fe-4S] cluster. FAD serves as cofactor. Requires FMN as cofactor.

The catalysed reaction is 2 L-glutamate + NADP(+) = L-glutamine + 2-oxoglutarate + NADPH + H(+). It participates in amino-acid biosynthesis; L-glutamate biosynthesis via GLT pathway; L-glutamate from 2-oxoglutarate and L-glutamine (NADP(+) route): step 1/1. The protein operates within energy metabolism; nitrogen metabolism. Functionally, catalyzes the conversion of L-glutamine and 2-oxoglutarate into two molecules of L-glutamate. This is Glutamate synthase [NADPH] large chain (gltB) from Escherichia coli (strain K12).